The following is a 311-amino-acid chain: Urease accessory protein UreD (311 aa).

This sequence belongs to the UreD family. In terms of assembly, ureD, UreF and UreG form a complex that acts as a GTP-hydrolysis-dependent molecular chaperone, activating the urease apoprotein by helping to assemble the nickel containing metallocenter of UreC. The UreE protein probably delivers the nickel.

The protein localises to the cytoplasm. In terms of biological role, required for maturation of urease via the functional incorporation of the urease nickel metallocenter. This Synechococcus sp. (strain CC9605) protein is Urease accessory protein UreD.